The primary structure comprises 849 residues: Neprilysin-1 (849 aa).

Topologically, residues 1 to 113 are cytoplasmic; it reads MSQQHEATAA…LKESQQRRRL (113 aa). Residues 41–61 show a composition bias toward low complexity; that stretch reads QQQVQHQAPHQMQQQQQQQQQ. Positions 41-63 are disordered; the sequence is QQQVQHQAPHQMQQQQQQQQQNK. The helical; Signal-anchor for type II membrane protein transmembrane segment at 114 to 134 threads the bilayer; the sequence is LVLAIAFTVLGAAIGALAIYF. The Extracellular portion of the chain corresponds to 135–849; that stretch reads ASVHQRCHLY…MNPAEKCSVW (715 aa). Basic and acidic residues predominate over residues 146–155; that stretch reads LEPDNDDRPN. The interval 146 to 167 is disordered; it reads LEPDNDDRPNGRWNQDSGSAHE. The Peptidase M13 domain occupies 172–849; that stretch reads ICMTQECVRT…MNPAEKCSVW (678 aa). 5 disulfide bridges follow: Cys-173–Cys-178, Cys-196–Cys-834, Cys-204–Cys-794, Cys-260–Cys-512, and Cys-721–Cys-846. 5 N-linked (GlcNAc...) asparagine glycosylation sites follow: Asn-309, Asn-326, Asn-393, Asn-589, and Asn-599. Position 684 (His-684) interacts with Zn(2+). Glu-685 is a catalytic residue. His-688 serves as a coordination point for Zn(2+). N-linked (GlcNAc...) asparagine glycosylation occurs at Asn-709. Glu-746 is a Zn(2+) binding site. Asp-750 (proton donor) is an active-site residue. An N-linked (GlcNAc...) asparagine glycan is attached at Asn-778.

It belongs to the peptidase M13 family. It depends on Zn(2+) as a cofactor. As to expression, expressed in the testicular tube, near and in the seminal vesicles. In adults and third-instar larvae, expressed in the midgut and in the mushroom bodies of the brain and neurons in the pars intercerebralis. Also expressed in neurons of the ventral ganglion and imaginal disks (wing and leg) of third-instar larvae. In stage 17 embryos, expressed in the peripheral nervous system, pharynx and midgut.

It is found in the cell membrane. The catalysed reaction is Preferential cleavage of polypeptides between hydrophobic residues, particularly with Phe or Tyr at P1'.. In terms of biological role, metalloendoprotease which functions in fertility and memory formation. Required in the dorsal paired medial neurons and alpha/beta mushroom body neurons for the proper formation of long-term and middle-term memories. Required in males to maximise egg-laying in female mates and is also required in females for their fertility. The protein is Neprilysin-1 of Drosophila melanogaster (Fruit fly).